The following is a 345-amino-acid chain: 3-dehydroquinate synthase (345 aa).

NAD(+) contacts are provided by residues glycine 86–aspartate 90, threonine 110–threonine 111, lysine 123, and lysine 132. Zn(2+) contacts are provided by glutamate 165, histidine 229, and histidine 243.

It belongs to the sugar phosphate cyclases superfamily. Dehydroquinate synthase family. It depends on NAD(+) as a cofactor. The cofactor is Co(2+). Zn(2+) is required as a cofactor.

The protein localises to the cytoplasm. It catalyses the reaction 7-phospho-2-dehydro-3-deoxy-D-arabino-heptonate = 3-dehydroquinate + phosphate. It functions in the pathway metabolic intermediate biosynthesis; chorismate biosynthesis; chorismate from D-erythrose 4-phosphate and phosphoenolpyruvate: step 2/7. In terms of biological role, catalyzes the conversion of 3-deoxy-D-arabino-heptulosonate 7-phosphate (DAHP) to dehydroquinate (DHQ). The protein is 3-dehydroquinate synthase of Pyrobaculum aerophilum (strain ATCC 51768 / DSM 7523 / JCM 9630 / CIP 104966 / NBRC 100827 / IM2).